The sequence spans 344 residues: uncharacterized protein (344 aa).

A disordered region spans residues 304 to 344 (AVPAPTPRRPLDSVLQIRQTPEKGRNASDRNARETGWFSPP). Residues 323 to 336 (TPEKGRNASDRNAR) show a composition bias toward basic and acidic residues.

This is an uncharacterized protein from Mycobacterium tuberculosis (strain CDC 1551 / Oshkosh).